The chain runs to 132 residues: Female-specific protein 800 (132 aa).

FS800 is likely to have some function in the production or maintenance of the schistosome egg. It may have a function unrelated to eggshell formation. This chain is Female-specific protein 800, found in Schistosoma mansoni (Blood fluke).